A 211-amino-acid chain; its full sequence is MYQPDFPPVPFRLGLYPVVDSVAWIERLLEAGVRTLQLRIKDRRDSEVEDDVIAAIALGRRYHARLFINDYWQLAIKHQAYGVHLGQEDLETTDLSAIRQAGLRLGVSTHDDMEIDVALAARPSYIALGHVFPTQTKQMPSAPQGLEQLARHIQRLADYPTVAIGGISLEKAPGVLATGVGSIAVVSAITQAADWRAATDQLLALAGAGDE.

4-amino-2-methyl-5-(diphosphooxymethyl)pyrimidine is bound by residues 37–41 (QLRIK) and Asn69. Residues Asp70 and Asp89 each contribute to the Mg(2+) site. Ser108 contributes to the 4-amino-2-methyl-5-(diphosphooxymethyl)pyrimidine binding site. 134 to 136 (TQT) is a binding site for 2-[(2R,5Z)-2-carboxy-4-methylthiazol-5(2H)-ylidene]ethyl phosphate. Position 137 (Lys137) interacts with 4-amino-2-methyl-5-(diphosphooxymethyl)pyrimidine. Residues Gly166 and 186-187 (VS) contribute to the 2-[(2R,5Z)-2-carboxy-4-methylthiazol-5(2H)-ylidene]ethyl phosphate site.

It belongs to the thiamine-phosphate synthase family. Mg(2+) is required as a cofactor.

The enzyme catalyses 2-[(2R,5Z)-2-carboxy-4-methylthiazol-5(2H)-ylidene]ethyl phosphate + 4-amino-2-methyl-5-(diphosphooxymethyl)pyrimidine + 2 H(+) = thiamine phosphate + CO2 + diphosphate. It catalyses the reaction 2-(2-carboxy-4-methylthiazol-5-yl)ethyl phosphate + 4-amino-2-methyl-5-(diphosphooxymethyl)pyrimidine + 2 H(+) = thiamine phosphate + CO2 + diphosphate. It carries out the reaction 4-methyl-5-(2-phosphooxyethyl)-thiazole + 4-amino-2-methyl-5-(diphosphooxymethyl)pyrimidine + H(+) = thiamine phosphate + diphosphate. Its pathway is cofactor biosynthesis; thiamine diphosphate biosynthesis; thiamine phosphate from 4-amino-2-methyl-5-diphosphomethylpyrimidine and 4-methyl-5-(2-phosphoethyl)-thiazole: step 1/1. Its function is as follows. Condenses 4-methyl-5-(beta-hydroxyethyl)thiazole monophosphate (THZ-P) and 2-methyl-4-amino-5-hydroxymethyl pyrimidine pyrophosphate (HMP-PP) to form thiamine monophosphate (TMP). The polypeptide is Thiamine-phosphate synthase (Klebsiella pneumoniae subsp. pneumoniae (strain ATCC 700721 / MGH 78578)).